The following is a 196-amino-acid chain: Small ribosomal subunit protein uS4c (196 aa).

A disordered region spans residues 20-39 (GLTRKTPKSGSNLKKKFHSG). The S4 RNA-binding domain maps to 89 to 152 (MRLDNILFRL…RSKCLVQNSI (64 aa)).

This sequence belongs to the universal ribosomal protein uS4 family. In terms of assembly, part of the 30S ribosomal subunit. Contacts protein S5. The interaction surface between S4 and S5 is involved in control of translational fidelity.

It localises to the plastid. The protein localises to the chloroplast. Functionally, one of the primary rRNA binding proteins, it binds directly to 16S rRNA where it nucleates assembly of the body of the 30S subunit. In terms of biological role, with S5 and S12 plays an important role in translational accuracy. In Dendrocalamus giganteus (Giant bamboo), this protein is Small ribosomal subunit protein uS4c (rps4).